We begin with the raw amino-acid sequence, 163 residues long: Cell division protein SepF (163 aa).

Residues 25-53 form a disordered region; that stretch reads SVAPHSGEERESAFSRRSAERAERTERPT. Positions 30 to 51 are enriched in basic and acidic residues; sequence SGEERESAFSRRSAERAERTER.

This sequence belongs to the SepF family. As to quaternary structure, homodimer. Interacts with FtsZ.

The protein localises to the cytoplasm. Its function is as follows. Cell division protein that is part of the divisome complex and is recruited early to the Z-ring. Probably stimulates Z-ring formation, perhaps through the cross-linking of FtsZ protofilaments. Its function overlaps with FtsA. The polypeptide is Cell division protein SepF (Heliobacterium modesticaldum (strain ATCC 51547 / Ice1)).